Reading from the N-terminus, the 260-residue chain is Putative imidazole glycerol phosphate synthase subunit hisF3 (260 aa).

Asp-135 is a catalytic residue.

Belongs to the HisA/HisF family. Heterodimer of HisH and HisF.

The protein resides in the cytoplasm. It carries out the reaction 5-[(5-phospho-1-deoxy-D-ribulos-1-ylimino)methylamino]-1-(5-phospho-beta-D-ribosyl)imidazole-4-carboxamide + L-glutamine = D-erythro-1-(imidazol-4-yl)glycerol 3-phosphate + 5-amino-1-(5-phospho-beta-D-ribosyl)imidazole-4-carboxamide + L-glutamate + H(+). It participates in amino-acid biosynthesis; L-histidine biosynthesis; L-histidine from 5-phospho-alpha-D-ribose 1-diphosphate: step 5/9. IGPS catalyzes the conversion of PRFAR and glutamine to IGP, AICAR and glutamate. The HisF subunit catalyzes the cyclization activity that produces IGP and AICAR from PRFAR using the ammonia provided by the HisH subunit. This Vibrio vulnificus (strain YJ016) protein is Putative imidazole glycerol phosphate synthase subunit hisF3 (hisF3).